The sequence spans 158 residues: Crossover junction endodeoxyribonuclease RuvC (158 aa).

Residues aspartate 7, glutamate 67, and aspartate 140 contribute to the active site. Aspartate 7, glutamate 67, and aspartate 140 together coordinate Mg(2+).

This sequence belongs to the RuvC family. As to quaternary structure, homodimer which binds Holliday junction (HJ) DNA. The HJ becomes 2-fold symmetrical on binding to RuvC with unstacked arms; it has a different conformation from HJ DNA in complex with RuvA. In the full resolvosome a probable DNA-RuvA(4)-RuvB(12)-RuvC(2) complex forms which resolves the HJ. Mg(2+) serves as cofactor.

The protein resides in the cytoplasm. It catalyses the reaction Endonucleolytic cleavage at a junction such as a reciprocal single-stranded crossover between two homologous DNA duplexes (Holliday junction).. Its function is as follows. The RuvA-RuvB-RuvC complex processes Holliday junction (HJ) DNA during genetic recombination and DNA repair. Endonuclease that resolves HJ intermediates. Cleaves cruciform DNA by making single-stranded nicks across the HJ at symmetrical positions within the homologous arms, yielding a 5'-phosphate and a 3'-hydroxyl group; requires a central core of homology in the junction. The consensus cleavage sequence is 5'-(A/T)TT(C/G)-3'. Cleavage occurs on the 3'-side of the TT dinucleotide at the point of strand exchange. HJ branch migration catalyzed by RuvA-RuvB allows RuvC to scan DNA until it finds its consensus sequence, where it cleaves and resolves the cruciform DNA. The protein is Crossover junction endodeoxyribonuclease RuvC of Dictyoglomus thermophilum (strain ATCC 35947 / DSM 3960 / H-6-12).